A 572-amino-acid chain; its full sequence is Urease subunit alpha (572 aa).

Residues 134–572 form the Urease domain; it reads GGIDSHIHFI…LPLAQRYFLF (439 aa). Ni(2+) is bound by residues histidine 139, histidine 141, and lysine 222. Lysine 222 bears the N6-carboxylysine mark. A substrate-binding site is contributed by histidine 224. Histidine 251 and histidine 277 together coordinate Ni(2+). The active-site Proton donor is the histidine 325. Aspartate 365 is a binding site for Ni(2+).

This sequence belongs to the metallo-dependent hydrolases superfamily. Urease alpha subunit family. In terms of assembly, heterotrimer of UreA (gamma), UreB (beta) and UreC (alpha) subunits. Three heterotrimers associate to form the active enzyme. Requires Ni cation as cofactor. Carboxylation allows a single lysine to coordinate two nickel ions.

The protein resides in the cytoplasm. It catalyses the reaction urea + 2 H2O + H(+) = hydrogencarbonate + 2 NH4(+). It functions in the pathway nitrogen metabolism; urea degradation; CO(2) and NH(3) from urea (urease route): step 1/1. The chain is Urease subunit alpha from Paracidovorax citrulli (strain AAC00-1) (Acidovorax citrulli).